Consider the following 340-residue polypeptide: DnaJ homolog subfamily B member 1 (340 aa).

Positions 2–70 (GKDYYQTLGL…REIFDRYGEE (69 aa)) constitute a J domain. Residues 68-90 (GEEGLKGSGPSGGSSGGTNGTSF) are disordered. Residues 73–86 (KGSGPSGGSSGGTN) are compositionally biased toward gly residues. Threonine 307 is modified (phosphothreonine).

In terms of assembly, interacts with DNAJC3. Interacts with HSF1 (via transactivation domain); this interaction results in the inhibition of heat shock- and HSF1-induced transcriptional activity during the attenuation and recovery phase period of the heat shock response. Interacts with BAG3.

Its subcellular location is the cytoplasm. It is found in the nucleus. It localises to the nucleolus. Functionally, interacts with HSP70 and can stimulate its ATPase activity. Stimulates the association between HSC70 and HIP. Negatively regulates heat shock-induced HSF1 transcriptional activity during the attenuation and recovery phase period of the heat shock response. Stimulates ATP hydrolysis and the folding of unfolded proteins mediated by HSPA1A/B (in vitro). This chain is DnaJ homolog subfamily B member 1 (DNAJB1), found in Bos taurus (Bovine).